The chain runs to 382 residues: UDP-4-amino-4-deoxy-L-arabinose--oxoglutarate aminotransferase (382 aa).

K182 carries the N6-(pyridoxal phosphate)lysine modification.

It belongs to the DegT/DnrJ/EryC1 family. ArnB subfamily. As to quaternary structure, homodimer. Pyridoxal 5'-phosphate is required as a cofactor.

It carries out the reaction UDP-4-amino-4-deoxy-beta-L-arabinose + 2-oxoglutarate = UDP-beta-L-threo-pentopyranos-4-ulose + L-glutamate. It functions in the pathway nucleotide-sugar biosynthesis; UDP-4-deoxy-4-formamido-beta-L-arabinose biosynthesis; UDP-4-deoxy-4-formamido-beta-L-arabinose from UDP-alpha-D-glucuronate: step 2/3. Its pathway is bacterial outer membrane biogenesis; lipopolysaccharide biosynthesis. Functionally, catalyzes the conversion of UDP-4-keto-arabinose (UDP-Ara4O) to UDP-4-amino-4-deoxy-L-arabinose (UDP-L-Ara4N). The modified arabinose is attached to lipid A and is required for resistance to polymyxin and cationic antimicrobial peptides. This chain is UDP-4-amino-4-deoxy-L-arabinose--oxoglutarate aminotransferase, found in Yersinia enterocolitica serotype O:8 / biotype 1B (strain NCTC 13174 / 8081).